Here is a 595-residue protein sequence, read N- to C-terminus: Solute carrier family 13 member 1 (595 aa).

The next 5 membrane-spanning stretches (helical) occupy residues 13-33, 40-60, 77-97, 113-133, and 134-154; these read FLLV…IRSK, ILFV…ITAL, VASA…CLAT, VMMV…STAF, and LSMW…VEAV. Residue N174 is glycosylated (N-linked (GlcNAc...) asparagine). Residues 190–218 form a disordered region; the sequence is QETNERKEKTKPALGSSNDKGKVSSKMET. Basic and acidic residues predominate over residues 208-218; sequence DKGKVSSKMET. 8 helical membrane-spanning segments follow: residues 239–259, 283–303, 348–368, 381–401, 464–484, 491–511, 512–532, and 553–573; these read LMCL…ITGT, SWFL…WIWL, IVTL…DPGF, GYVT…LIPA, PLGS…VTSL, PATI…IHVN, PLHI…LPVA, and AGLG…FTWI. A glycan (N-linked (GlcNAc...) asparagine) is linked at N591.

Belongs to the SLC13A/DASS transporter (TC 2.A.47) family. NADC subfamily. As to expression, kidney and intestine.

The protein resides in the apical cell membrane. The catalysed reaction is sulfate(out) + 3 Na(+)(out) = sulfate(in) + 3 Na(+)(in). The enzyme catalyses selenate(out) + 3 Na(+)(out) = selenate(in) + 3 Na(+)(in). It carries out the reaction thiosulfate(out) + 3 Na(+)(out) = thiosulfate(in) + 3 Na(+)(in). Functionally, sodium:sulfate symporter that mediates sulfate reabsorption in the kidney and small intestine. Can also mediate the transport of selenate and thiosulfate. In Rattus norvegicus (Rat), this protein is Solute carrier family 13 member 1 (Slc13a1).